The chain runs to 379 residues: MKITVNFLLVALIGVPSVLSDRHITRDKRQAMRDYAKWENNKMSLFFYNLPLEMQAMFRDAINYLENHTCLKFEYNENAETAVRIRKGNGCYSLYGMHAGEVQDLTLDYNCASFGTAVHEIMHALGIAHGQARSDRDDYLIVDSTNSNDGIENTENLVPFDYGSVMLYARDPHSDKRIPIDPEYNFTMGSLRVAFYDMVLLNKFYGCNCDNHPRKLDCKNGGYQNPANCEECLCTDGFNGQLCDQHEGVYVLEAKKEWDASGVRNNYRKGIETNTMPEYTYFALTAPEGSTIEVRITKLSGFFCQHTCDYNGVELKYKTDRRIVSPLVCCDNDNLWNKTRSSTNNPFIIAKYGNNRTPHFEFEYRYIPGNATAAPEENN.

An N-terminal signal peptide occupies residues methionine 1–serine 20. Residues aspartate 21–arginine 29 constitute a propeptide that is removed on maturation. One can recognise a Peptidase M12A domain in the interval glutamine 30 to asparagine 208. N-linked (GlcNAc...) asparagine glycosylation is present at asparagine 67. 4 disulfide bridges follow: cysteine 70–cysteine 207, cysteine 91–cysteine 111, cysteine 209–cysteine 229, and cysteine 234–cysteine 243. Histidine 119 contacts Zn(2+). Glutamate 120 is an active-site residue. Positions 123 and 129 each coordinate Zn(2+). An N-linked (GlcNAc...) asparagine glycan is attached at asparagine 185. The EGF-like domain maps to lysine 203–aspartate 244. 2 N-linked (GlcNAc...) asparagine glycosylation sites follow: asparagine 337 and asparagine 370.

Requires Zn(2+) as cofactor.

It localises to the secreted. In terms of biological role, metalloprotease. The protein is Zinc metalloproteinase nas-20 (nas-20) of Caenorhabditis elegans.